Consider the following 219-residue polypeptide: Large ribosomal subunit protein uL3 (219 aa).

Positions 124-154 (FSGSIKRHNQSEGPKSHGSRYHRRPGSMGPI) are disordered.

Belongs to the universal ribosomal protein uL3 family. Part of the 50S ribosomal subunit. Forms a cluster with proteins L14 and L19.

One of the primary rRNA binding proteins, it binds directly near the 3'-end of the 23S rRNA, where it nucleates assembly of the 50S subunit. This Phytoplasma mali (strain AT) protein is Large ribosomal subunit protein uL3.